The following is a 171-amino-acid chain: Co-chaperone protein HscB homolog (171 aa).

One can recognise a J domain in the interval 2–74 (NHFELFGLPP…ISRAEYLLSQ (73 aa)).

It belongs to the HscB family. As to quaternary structure, interacts with HscA and stimulates its ATPase activity.

Co-chaperone involved in the maturation of iron-sulfur cluster-containing proteins. Seems to help targeting proteins to be folded toward HscA. The sequence is that of Co-chaperone protein HscB homolog from Vibrio vulnificus (strain YJ016).